The chain runs to 1742 residues: NACHT and WD repeat domain-containing protein 2 (1742 aa).

LRR repeat units follow at residues 386–410 (FYEY…GHIN), 677–698 (LEDV…TRPS), 724–747 (VKNV…LYLQ), 883–906 (YSQE…VIAF), and 925–953 (LPKL…SSMD). The region spanning 410–737 (NPLVVYGGPC…TLLVWANRHL (328 aa)) is the NACHT domain. WD repeat units lie at residues 963–1004 (LASS…LLRQ), 1007–1046 (TAQS…LLSE), 1140–1179 (FSGG…NPQL), 1229–1271 (RHNE…ASLQ), 1272–1311 (ESSG…AMSN), 1314–1353 (KTGK…IEAV), 1355–1394 (KHEG…NLFR), 1396–1434 (NGQR…RVCN), 1476–1516 (EDGI…ICRR), 1522–1561 (NFLK…LRVV), and 1614–1653 (SLYK…DAAL). The segment at 1702 to 1721 (PITVSDSSESNEATPSKKHN) is disordered. The span at 1703-1715 (ITVSDSSESNEAT) shows a compositional bias: polar residues.

The polypeptide is NACHT and WD repeat domain-containing protein 2 (Nwd2) (Mus musculus (Mouse)).